The following is a 697-amino-acid chain: tRNA 5-methylaminomethyl-2-thiouridine biosynthesis bifunctional protein MnmC (697 aa).

The segment at 1–275 (MTAKPHKSCQ…KPATLAAIDH (275 aa)) is tRNA (mnm(5)s(2)U34)-methyltransferase. The FAD-dependent cmnm(5)s(2)U34 oxidoreductase stretch occupies residues 280-697 (VGGGLASANL…LRKLLKGKAL (418 aa)).

In the N-terminal section; belongs to the methyltransferase superfamily. tRNA (mnm(5)s(2)U34)-methyltransferase family. It in the C-terminal section; belongs to the DAO family. The cofactor is FAD.

The protein resides in the cytoplasm. It carries out the reaction 5-aminomethyl-2-thiouridine(34) in tRNA + S-adenosyl-L-methionine = 5-methylaminomethyl-2-thiouridine(34) in tRNA + S-adenosyl-L-homocysteine + H(+). Catalyzes the last two steps in the biosynthesis of 5-methylaminomethyl-2-thiouridine (mnm(5)s(2)U) at the wobble position (U34) in tRNA. Catalyzes the FAD-dependent demodification of cmnm(5)s(2)U34 to nm(5)s(2)U34, followed by the transfer of a methyl group from S-adenosyl-L-methionine to nm(5)s(2)U34, to form mnm(5)s(2)U34. This Shewanella sp. (strain ANA-3) protein is tRNA 5-methylaminomethyl-2-thiouridine biosynthesis bifunctional protein MnmC.